The sequence spans 659 residues: Endoglucanase A (659 aa).

Residues 1–500 (MLIFETYLIL…SKLPNFPPKE (500 aa)) form a catalytic region. The Nucleophile role is filled by D101. The tract at residues 413 to 433 (NSPKHPHHRTAHGSWSNQLTN) is disordered. Active-site residues include H419, D457, and E466. The region spanning 501-658 (QVEDEFFVEA…GVLVFGTLPD (158 aa)) is the CBM3 domain.

The protein belongs to the glycosyl hydrolase 9 (cellulase E) family.

It is found in the secreted. The enzyme catalyses Endohydrolysis of (1-&gt;4)-beta-D-glucosidic linkages in cellulose, lichenin and cereal beta-D-glucans.. With respect to regulation, strongly inhibited by ZnCl(2) and by EDTA. Active on carboxymethyl cellulose and carboxymethyl cellulose-RBB but not avicel, xanthan gum, carboxymethyl-curdulan-RBB or carboxymethyl-xylan-RBB. The chain is Endoglucanase A (eglA) from Bacillus pumilus (Bacillus mesentericus).